The sequence spans 75 residues: Small ribosomal subunit protein bS18 (75 aa).

The protein belongs to the bacterial ribosomal protein bS18 family. Part of the 30S ribosomal subunit. Forms a tight heterodimer with protein bS6.

Functionally, binds as a heterodimer with protein bS6 to the central domain of the 16S rRNA, where it helps stabilize the platform of the 30S subunit. This is Small ribosomal subunit protein bS18 from Photobacterium profundum (strain SS9).